Reading from the N-terminus, the 1162-residue chain is Leptin receptor (1162 aa).

The first 21 residues, 1–21, serve as a signal peptide directing secretion; it reads MTCQKFYVVLLHWEFLYVITA. Residues 22-839 lie on the Extracellular side of the membrane; it reads LNLAYPTSPW…DIAKQQNDAG (818 aa). Intrachain disulfides connect C37–C90, C89–C99, C131–C142, C186–C195, and C188–C193. N-linked (GlcNAc...) asparagine glycosylation is found at N55, N56, N73, and N98. N-linked (GlcNAc...) asparagine glycosylation occurs at N187. Residues 238–331 form the Fibronectin type-III 1 domain; sequence PPLGLRMEVT…LPQLFTTQDV (94 aa). N-linked (GlcNAc...) asparagine glycosylation is found at N275, N345, and N356. 2 cysteine pairs are disulfide-bonded: C350–C410 and C411–C416. An N-linked (GlcNAc...) asparagine glycan is attached at N431. 3 disulfides stabilise this stretch: C434-C445, C471-C526, and C486-C496. The segment at 465–482 is leptin-binding; that stretch reads HRRSLYCPDNPSIRPTSE. Residues N514, N622, N657, N668, N686, N695, N698, and N726 are each glycosylated (N-linked (GlcNAc...) asparagine). Fibronectin type-III domains follow at residues 537 to 632, 637 to 729, and 738 to 831; these read PPSN…TLVM, PMRG…NLTF, and AVQS…KDDI. Positions 620–624 match the WSXWS motif motif; that stretch reads WSNWS. Residues 840-860 traverse the membrane as a helical segment; it reads LYVIVPIIISSCVLLLGTLLI. The Cytoplasmic segment spans residues 861–1162; that stretch reads SHQRMKKLFW…IENKMCDLTV (302 aa). The Box 1 motif signature appears at 869–877; it reads FWDDVPNPK. Position 880 is a phosphoserine (S880). The interval 891–896 is required for JAK2 activation; it reads ETFEHL. The required for STAT3 phosphorylation stretch occupies residues 896–904; that stretch reads LFTKHAESV. Y985 carries the post-translational modification Phosphotyrosine; by JAK2. Y1077 carries the post-translational modification Phosphotyrosine. Y1138 bears the Phosphotyrosine; by JAK2 mark.

It belongs to the type I cytokine receptor family. Type 2 subfamily. In terms of assembly, present as a mixture of monomers and dimers. The phosphorylated receptor binds a number of SH2 domain-containing proteins such as JAK2, STAT3, PTPN11, and SOCS3. Interaction with SOCS3 inhibits JAK/STAT signaling and MAPK cascade. Post-translationally, on ligand binding, phosphorylated on two conserved C-terminal tyrosine residues (isoform B only) by JAK2. Tyr-985 is required for complete binding and activation of PTPN11, ERK/FOS activation,for interaction with SOCS3 and SOCS3 mediated inhibition of leptin signaling. Phosphorylation on Tyr-1138 is required for STAT3 binding/activation. Phosphorylation of Tyr-1077 has a more accessory role. Isoform B is expressed in kidney, liver, lung, ovary, spleen and uterus. Increased level in uterus during gestation. Isoform A and isoform C are predominantly expressed in cerebral microvessels and choroid plexus, with lower levels in cortex, cerebellum and hypothalamus but also liver and lung. Isoform F is expressed at high levels in brain, liver and spleen and less in stomach, kidney, thymus, heart, lung and hypothalamus.

The protein resides in the cell membrane. The protein localises to the basolateral cell membrane. It localises to the secreted. In terms of biological role, receptor for hormone LEP/leptin. On ligand binding, mediates LEP central and peripheral effects through the activation of different signaling pathways such as JAK2/STAT3 and MAPK cascade/FOS. In the hypothalamus, LEP acts as an appetite-regulating factor that induces a decrease in food intake and an increase in energy consumption by inducing anorexinogenic factors and suppressing orexigenic neuropeptides, also regulates bone mass and secretion of hypothalamo-pituitary-adrenal hormones. In the periphery, increases basal metabolism, influences reproductive function, regulates pancreatic beta-cell function and insulin secretion, is pro-angiogenic and affects innate and adaptive immunity. Control of energy homeostasis and melanocortin production (stimulation of POMC and full repression of AgRP transcription) is mediated by STAT3 signaling, whereas distinct signals regulate NPY and the control of fertility, growth and glucose homeostasis. Involved in the regulation of counter-regulatory response to hypoglycemia by inhibiting neurons of the parabrachial nucleus. Has a specific effect on T lymphocyte responses, differentially regulating the proliferation of naive and memory T-cells. Leptin increases Th1 and suppresses Th2 cytokine production. Functionally, may transport LEP across the blood-brain barrier. Binds LEP and mediates LEP endocytosis. Does not induce phosphorylation of and activate STAT3. Antagonizes Isoform A and isoform B-mediated LEP binding and endocytosis. This chain is Leptin receptor (Lepr), found in Rattus norvegicus (Rat).